Reading from the N-terminus, the 282-residue chain is Small ribosomal subunit protein uS2 (282 aa).

Positions 245 to 265 are disordered; sequence AEEAVEELPLPTGEAQDEASS.

It belongs to the universal ribosomal protein uS2 family.

This Chlamydia trachomatis serovar A (strain ATCC VR-571B / DSM 19440 / HAR-13) protein is Small ribosomal subunit protein uS2.